The primary structure comprises 401 residues: Chalcone synthase 1 (401 aa).

Cys-168 is an active-site residue.

The protein belongs to the thiolase-like superfamily. Chalcone/stilbene synthases family.

The enzyme catalyses (E)-4-coumaroyl-CoA + 3 malonyl-CoA + 3 H(+) = 2',4,4',6'-tetrahydroxychalcone + 3 CO2 + 4 CoA. Its pathway is secondary metabolite biosynthesis; flavonoid biosynthesis. The primary product of this enzyme is 4,2',4',6'-tetrahydroxychalcone (also termed naringenin-chalcone or chalcone) which can under specific conditions spontaneously isomerize into naringenin. The protein is Chalcone synthase 1 (CHS1) of Sorghum bicolor (Sorghum).